The primary structure comprises 236 residues: NAD-dependent protein deacetylase (236 aa).

One can recognise a Deacetylase sirtuin-type domain in the interval M1–G236. NAD(+) contacts are provided by A18, T22, F29, R30, Q96, V98, D99, and H114. A nicotinamide-binding site is contributed by F29. Positions 98 and 99 each coordinate nicotinamide. H114 serves as the catalytic Proton acceptor. C122, C125, C141, and C143 together coordinate Zn(2+). Residues S181, S182, N206, and I225 each contribute to the NAD(+) site.

It belongs to the sirtuin family. Class U subfamily. The cofactor is Zn(2+).

It localises to the cytoplasm. The catalysed reaction is N(6)-acetyl-L-lysyl-[protein] + NAD(+) + H2O = 2''-O-acetyl-ADP-D-ribose + nicotinamide + L-lysyl-[protein]. Its function is as follows. NAD-dependent protein deacetylase which modulates the activities of several enzymes which are inactive in their acetylated form. In Oceanobacillus iheyensis (strain DSM 14371 / CIP 107618 / JCM 11309 / KCTC 3954 / HTE831), this protein is NAD-dependent protein deacetylase.